The sequence spans 629 residues: Glutamyl-tRNA(Gln) amidotransferase subunit E (629 aa).

The interval 405–426 (PEETRRALPDGNTQYMRPLPGK) is disordered.

It belongs to the GatB/GatE family. GatE subfamily. Heterodimer of GatD and GatE.

The catalysed reaction is L-glutamyl-tRNA(Gln) + L-glutamine + ATP + H2O = L-glutaminyl-tRNA(Gln) + L-glutamate + ADP + phosphate + H(+). Functionally, allows the formation of correctly charged Gln-tRNA(Gln) through the transamidation of misacylated Glu-tRNA(Gln) in organisms which lack glutaminyl-tRNA synthetase. The reaction takes place in the presence of glutamine and ATP through an activated gamma-phospho-Glu-tRNA(Gln). The GatDE system is specific for glutamate and does not act on aspartate. This is Glutamyl-tRNA(Gln) amidotransferase subunit E from Thermococcus sibiricus (strain DSM 12597 / MM 739).